A 441-amino-acid polypeptide reads, in one-letter code: C-terminal-binding protein 1 (441 aa).

The tract at residues 1-70 (MGSSHLLNKG…EIHEKVLNEA (70 aa)) is interaction with GLIS2 1. NAD(+)-binding positions include serine 100, 180–185 (IGLGRV), aspartate 204, 237–243 (CGLNEHN), 264–266 (TAR), and aspartate 290. Arginine 266 is a catalytic residue. The interaction with GLIS2 2 stretch occupies residues 288-360 (ALDVHESEPF…VNKDHLTAAT (73 aa)). Glutamate 295 is an active-site residue. A Phosphoserine modification is found at serine 300. Histidine 315 acts as the Proton donor in catalysis. 315–318 (HAAW) contacts NAD(+). The segment at 409 to 441 (SHGLPPVAHPPHAPSPGQTVKPEADRDHTSDQL) is disordered. Serine 423 carries the phosphoserine modification. Residue lysine 429 forms a Glycyl lysine isopeptide (Lys-Gly) (interchain with G-Cter in SUMO) linkage. A compositionally biased stretch (basic and acidic residues) spans 430 to 441 (PEADRDHTSDQL).

The protein belongs to the D-isomer specific 2-hydroxyacid dehydrogenase family. Homo- or heterodimer. Heterodimer with CTBP2. Interacts with ELK3 (via its PXDLS motif). Interacts with RBBP8 (via its PXDLS motif). Interacts with PNN, MECOM and ZFHX1B. Interacts with ZNF366 (via PXDLS motif). Interaction with SATB1 (non-acetylated form); the interaction stabilizes its attachment to DNA and promotes transcription repression. Interacts with PRDM16; the interaction represses white adipose tissue (WAT)-specific genes expression. Interacts with GLIS2, HIPK2, FOXP1, FOXP2, HDAC4, HDAC5, HDAC9, NRIP1, WIZ and ZNF217. Interacts with BCL6; the interaction is required for BCL6 transcriptional autoinhibition and inhibition of some BCL6 target genes. Interacts with IKZF4. Interacts with MCRIP1 (unphosphorylated form, via the PXDLS motif); competitively inhibiting CTBP-ZEB1 interaction. Interacts with Bassoon/BSN; this interaction targets and anchors CTBP1 to presynapses. Interacts with SIMC1. The cofactor is NAD(+). In terms of processing, ADP-ribosylated; when cells are exposed to brefeldin A. The level of phosphorylation appears to be regulated during the cell cycle. Phosphorylation by HIPK2 on Ser-423 induces proteasomal degradation. Post-translationally, sumoylation on Lys-429 is promoted by the E3 SUMO-protein ligase CBX4. In terms of tissue distribution, expressed in a wide range of adult tissues.

It localises to the cytoplasm. The protein resides in the nucleus. In terms of biological role, corepressor targeting diverse transcription regulators such as GLIS2 or BCL6. Has dehydrogenase activity. Involved in controlling the equilibrium between tubular and stacked structures in the Golgi complex. Functions in brown adipose tissue (BAT) differentiation. This is C-terminal-binding protein 1 (Ctbp1) from Mus musculus (Mouse).